Reading from the N-terminus, the 222-residue chain is Collectrin (222 aa).

The signal sequence occupies residues 1 to 14 (MLWLLFFLVTAIHA). Over 15 to 141 (DLCRPDAENA…LAPPTDPSVP (127 aa)) the chain is Extracellular. One can recognise a Collectrin-like domain in the interval 21–222 (AENAFKVRLS…VTEDERLTPL (202 aa)). Asn76 and Asn93 each carry an N-linked (GlcNAc...) asparagine glycan. Residues 142-162 (IWIIIFGVIFCIVLVATMLLI) traverse the membrane as a helical segment. Topologically, residues 163–222 (ISGIRQHRRKNKGPSEMEDSEDKCENVITIENGIPCDPLDMKGGHINDAFVTEDERLTPL) are cytoplasmic. 2 positions are modified to phosphothreonine: Thr214 and Thr220.

It belongs to the CLTRN family. As to quaternary structure, monomer. Homodimer; dimerization prevents CLTRN cleavage by BACE2. Interacts with SLC6A18; this interaction regulates the trafficking of SLC6A18 to the cell membrane and its amino acid transporter activity. Interacts with SLC6A19; this interaction regulates the trafficking of SLC6A19 to the cell membrane and its amino acid transporter activity. Interacts with SNAPIN. Post-translationally, glycosylated. Glycosylation is required for plasma membrane localization and for its cleavage by BACE2. Proteolytically processed in pancreatic beta cells by BACE2 leading to the generation and extracellular release of soluble CLTRN, and a corresponding cell-associated C-terminal fragment which is later cleaved by gamma-secretase. This shedding process inactivates CLTRN. Three cleavage sites have been identified for BACE2, two clustered sites after Phe-116 and Leu-118 and a more membrane proximal site at Phe-125; the preferred BACE2 cleavage site seems to be between Phe-125 and Leu-126, Phe-116 and Leu-118 act as alternative sites.

It is found in the cell membrane. Plays an important role in amino acid transport by acting as binding partner of amino acid transporters SLC6A18 and SLC6A19, regulating their trafficking on the cell surface and their activity. May also play a role in trafficking of amino acid transporters SLC3A1 and SLC7A9 to the renal cortical cell membrane. Regulator of SNARE complex function. Stimulator of beta cell replication. This is Collectrin (CLTRN) from Bos taurus (Bovine).